The chain runs to 191 residues: Glycerol-3-phosphate acyltransferase (191 aa).

5 helical membrane passes run 10–30 (LAFI…CISA), 57–77 (FGSV…FLAV), 84–104 (FAST…YMAF), 118–138 (FVLV…FFVL), and 158–178 (YALL…LIFI).

Belongs to the PlsY family. As to quaternary structure, probably interacts with PlsX.

The protein localises to the cell inner membrane. It carries out the reaction an acyl phosphate + sn-glycerol 3-phosphate = a 1-acyl-sn-glycero-3-phosphate + phosphate. It participates in lipid metabolism; phospholipid metabolism. Functionally, catalyzes the transfer of an acyl group from acyl-phosphate (acyl-PO(4)) to glycerol-3-phosphate (G3P) to form lysophosphatidic acid (LPA). This enzyme utilizes acyl-phosphate as fatty acyl donor, but not acyl-CoA or acyl-ACP. This chain is Glycerol-3-phosphate acyltransferase, found in Neorickettsia sennetsu (strain ATCC VR-367 / Miyayama) (Ehrlichia sennetsu).